Reading from the N-terminus, the 211-residue chain is Large ribosomal subunit protein uL3 (211 aa).

The residue at position 150 (glutamine 150) is an N5-methylglutamine.

It belongs to the universal ribosomal protein uL3 family. In terms of assembly, part of the 50S ribosomal subunit. Forms a cluster with proteins L14 and L19. Methylated by PrmB.

Functionally, one of the primary rRNA binding proteins, it binds directly near the 3'-end of the 23S rRNA, where it nucleates assembly of the 50S subunit. In Pseudomonas entomophila (strain L48), this protein is Large ribosomal subunit protein uL3.